A 359-amino-acid polypeptide reads, in one-letter code: MIATQAKLVYQLNKYYNERCQARKAAIAKTIREVCKVVSDVLKEVEVQEPRFISSLSEIDARYEGMEVIAPNEFEVVLYLNQMGVFNFVDDGSLPGCAVLKLSDGRKRSMSLWVEFITASGYLSARKIRSRFQTLVAQAVDKCSYRDVVKMVADTSEVKLRIRERYVVQITPAFKCTGIWPRSAAQWPMPHIPWPGPNRVAEVKAEGFNLLSKECYSLTGKQSSAESDAWVLQFAEAENRLLMSGCRKKCLSVLKTLRDRHLELPGQPLNNYHMKTLLLYECEKHPRETDWDESCLGDRLNGILLQLISCLQCRRCPHYFLPNLDLFQGKPHSALETAAKQTWRLAREILTNAKSLDKL.

The protein belongs to the mab-21 family.

It localises to the nucleus. The protein resides in the cytoplasm. In terms of biological role, required for eye morphogenesis. May promote the survival of proliferating retinal progenitor cells. The protein is Protein mab-21-like 2 (mab21l2) of Danio rerio (Zebrafish).